Here is a 623-residue protein sequence, read N- to C-terminus: Chaperone protein DnaK (623 aa).

T175 bears the Phosphothreonine; by autocatalysis mark. The tract at residues 578-623 (ANPEGAPGAGFDPNNMGGANAGNASAGNDKKDDNVVDADFKVEDDK) is disordered. Residues 591-604 (NNMGGANAGNASAG) show a composition bias toward low complexity. Residues 605 to 623 (NDKKDDNVVDADFKVEDDK) show a composition bias toward basic and acidic residues.

It belongs to the heat shock protein 70 family.

Acts as a chaperone. This chain is Chaperone protein DnaK, found in Clostridium botulinum (strain 657 / Type Ba4).